The following is an 85-amino-acid chain: Toxin To9 (85 aa).

Positions 1-19 (MNYSTLIAVASLLTAGTES) are cleaved as a signal peptide. The LCN-type CS-alpha/beta domain maps to 21-81 (KDGYPVKEGD…AAIKGYGRCR (61 aa)). Cystine bridges form between cysteine 31–cysteine 80, cysteine 35–cysteine 56, cysteine 42–cysteine 63, and cysteine 46–cysteine 65. Proline 82 is subject to Proline amide.

It belongs to the long (4 C-C) scorpion toxin superfamily. Sodium channel inhibitor family. Alpha subfamily. In terms of tissue distribution, expressed by the venom gland.

It localises to the secreted. Its function is as follows. Alpha toxins bind voltage-independently at site-3 of sodium channels (Nav) and inhibit the inactivation of the activated channels, thereby blocking neuronal transmission. The sequence is that of Toxin To9 from Tityus obscurus (Amazonian scorpion).